We begin with the raw amino-acid sequence, 742 residues long: Collectin-12 (742 aa).

The Cytoplasmic portion of the chain corresponds to Met1–Lys37. The chain crosses the membrane as a helical; Signal-anchor for type II membrane protein span at residues Phe38–Gly58. The Extracellular portion of the chain corresponds to Tyr59–Val742. Coiled-coil stretches lie at residues Gly71–Ala101 and Asn271–Glu334. A disordered region spans residues Thr439 to Asn605. Collagen-like domains are found at residues Gly467–Pro526 and Gly527–Pro586. Positions Pro475 to Pro492 are enriched in pro residues. Low complexity-rich tracts occupy residues Arg502–Pro522 and Gln532–Pro556. Residues Pro571 to Gly589 show a composition bias toward pro residues. Intrachain disulfides connect Cys607/Cys618, Cys635/Cys730, and Cys708/Cys722. Residues Tyr614–Glu731 enclose the C-type lectin domain. The Ca(2+) site is built by Ile644, Asn646, Glu650, Asp670, and Glu674. The a carbohydrate site is built by Lys691, Gln694, and Asp696. Gln694, Asp696, Asn697, Glu706, Asp707, Asn718, Asp719, and Glu731 together coordinate Ca(2+). Glu706 provides a ligand contact to a carbohydrate. A carbohydrate is bound by residues Asn718 and Asp719.

As to expression, widely expressed.

The protein localises to the membrane. In terms of biological role, scavenger receptor that displays several functions associated with host defense. Binds to carbohydrates. The polypeptide is Collectin-12 (COLEC12) (Gallus gallus (Chicken)).